A 429-amino-acid polypeptide reads, in one-letter code: Probable M18 family aminopeptidase 2 (429 aa).

Zn(2+) is bound by residues His82, His156, and His401.

This sequence belongs to the peptidase M18 family. The cofactor is Zn(2+).

The sequence is that of Probable M18 family aminopeptidase 2 from Pseudomonas putida (strain ATCC 47054 / DSM 6125 / CFBP 8728 / NCIMB 11950 / KT2440).